Consider the following 664-residue polypeptide: E3 ubiquitin-protein ligase RNF139 (664 aa).

Position 2 is an N-acetylalanine (Ala2). The next 12 membrane-spanning stretches (helical) occupy residues 51–71, 85–105, 125–145, 154–174, 178–198, 293–313, 323–343, 356–376, 390–410, 420–440, 469–489, and 495–512; these read IVLQ…VLIL, AFLL…HIDF, SLWM…VTLL, LIIL…PLHI, LVFT…AVKL, GMSA…LAFI, LGFV…LSGL, MCLL…PVLM, FPVL…SYVL, LFAA…SLTV, SIIV…TMMF, and IRAF…YLQA. The RING-type; atypical zinc finger occupies 547 to 586; the sequence is CAICYHEFTTSARITPCNHYFHALCLRKWLYIQDTCPMCH. Positions 599–610 are enriched in polar residues; the sequence is SNVSNNNGFTPP. The segment at 599 to 664 is disordered; it reads SNVSNNNGFT…AAEEFNDDTD (66 aa). A compositionally biased stretch (basic and acidic residues) spans 616–628; sequence EAVREAAAESDRE. Positions 629-639 are enriched in acidic residues; it reads LNEDDSTDCDD. Position 634 is a phosphoserine (Ser634). 2 positions are modified to phosphothreonine: Thr635 and Thr663.

Interacts with VHL. Interacts with MHC class I and HM13. Component of SCAP-SREBP complex composed of SREBF2, SCAP and RNF139; the complex hampers the interaction between SCAP and SEC24B, thereby reducing SREBF2 proteolytic processing. Interacts with SREBF2 (via C-terminal domain). Interacts with SCAP; the interaction inhibits the interaction of SCAP with SEC24B and hampering the ER to Golgi transport of the SCAP-SREBP complex. Interacts with SEC24B. Interacts with INSIG1 and INSIG2. Interacts with EIF3F and EIF3H; the interaction leads to protein translation inhibitions in a ubiquitination-dependent manner. Interacts with XBP1; the interaction induces ubiquitination and degradation of XBP1. Interacts with AUP1, AMFR and UBE2G2; interaction with AUP1 facilitates interaction of RNF139 with ubiquitin-conjugating enzyme UBE2G2 and ubiquitin ligase AMFR/gp78, leading to sterol-induced ubiquitination of HMGCR and its subsequent proteasomal degradation. Autoubiquitinated. Ubiquitination is induced by sterol and leads to ist degradation via the ubiquitin-proteasome pathway.

It localises to the endoplasmic reticulum membrane. The enzyme catalyses S-ubiquitinyl-[E2 ubiquitin-conjugating enzyme]-L-cysteine + [acceptor protein]-L-lysine = [E2 ubiquitin-conjugating enzyme]-L-cysteine + N(6)-ubiquitinyl-[acceptor protein]-L-lysine.. It participates in protein modification; protein ubiquitination. E3-ubiquitin ligase; acts as a negative regulator of cell proliferation through mechanisms involving G2/M arrest and cell death. Required for MHC class I ubiquitination in cells expressing the cytomegalovirus protein US2 before dislocation from the endoplasmic reticulum (ER). Affects SREBP processing by hindering the SREBP-SCAP complex translocation from the ER to the Golgi, thereby reducing SREBF2 target gene expression. Involved in the sterol-accelerated degradation of HMGCR. This is achieved through binding to INSIG1 and/or INSIG2 at the ER membrane. In addition, interaction of RNF139 with AUP1 facilitates interaction of RNF139 with ubiquitin-conjugating enzyme UBE2G2 and ubiquitin ligase AMFR, leading to ubiquitination of HMGCR. The ubiquitinated HMGCR is then released from the ER by the complex into the cytosol for subsequent destruction. Required for INSIG1 ubiquitination. May be required for EIF3 complex ubiquitination. The chain is E3 ubiquitin-protein ligase RNF139 (RNF139) from Pongo abelii (Sumatran orangutan).